Reading from the N-terminus, the 21-residue chain is Serine protease inhibitor 1 (21 aa).

Residues 1 to 21 (EQQCTPGQTKKEDCNNCTSGD) form the Pacifastin domain. The tract at residues 1-21 (EQQCTPGQTKKEDCNNCTSGD) is disordered.

It belongs to the protease inhibitor I19 family. As to expression, expressed in hemolymph.

Its subcellular location is the secreted. Its function is as follows. Probable serine protease inhibitor. This is Serine protease inhibitor 1 from Melanoplus sanguinipes (Migratory grasshopper).